We begin with the raw amino-acid sequence, 252 residues long: Demethylmenaquinone methyltransferase (252 aa).

Residues threonine 64, aspartate 85, and 112–113 each bind S-adenosyl-L-methionine; that span reads NA.

Belongs to the class I-like SAM-binding methyltransferase superfamily. MenG/UbiE family.

The enzyme catalyses a 2-demethylmenaquinol + S-adenosyl-L-methionine = a menaquinol + S-adenosyl-L-homocysteine + H(+). Its pathway is quinol/quinone metabolism; menaquinone biosynthesis; menaquinol from 1,4-dihydroxy-2-naphthoate: step 2/2. Functionally, methyltransferase required for the conversion of demethylmenaquinol (DMKH2) to menaquinol (MKH2). The chain is Demethylmenaquinone methyltransferase from Lactococcus lactis subsp. lactis (strain IL1403) (Streptococcus lactis).